We begin with the raw amino-acid sequence, 662 residues long: MDWDQDRSSTELRKEKSRDAARSRRSQETEVLYQLAHTLPFARGVSAHLDKASIMRLTISYLRMHRLCAAGEWNQVRKEGEPLDACYLKALEGFVMVLTAEGDMAYLSENVSKHLGLSQLELIGHSIFDFIHPCDQEELQDALTPRPSLSKKKSEAATGRHFSLRMKSTLTSRGRALNLKAATWKVLHCSGHMRAYKPPAQTSPAGSPRSEPPLQCLVLICEAIPHPASLEPPLGRGAFLSRHSLDMKFTYCDERIAEVAGYSPDDLIGCSAYEYIHALDSDAVSRSIHTLLSKGQAVTGQYRFLARTGGYLWTQTQATVVSGGRGPQSESIICVHFLISRVEENGVVLSLEQTEQHTRRPPQLGTSSKKGIPGNSLDPPAPRILAFLHPPALSEASLAADPRRFCSPDLRRLMAPILDGPPTAATPSTPQAARRPQSPLPADLPDQLAVGLENAHRLSTARKNKTMETDLDIAQDPDTPDLEMLAPYISMDDDFQLNSSEQLPKVHRRPPRTARRPRARSFHGLSPPIPEATLLPRWGSDPRLNCSSPSKGDPPTAPLTPRTRKRALAQSSEDKGLELLETKPPKRSPRLEPGSVLLPPLSLSFLLQGRQLPGNQPDPRAPLVDSHEPLGLAPSLLSLYQHEETIQSRNHFLPAAGLAQTH.

Positions 1–25 (MDWDQDRSSTELRKEKSRDAARSRR) are disordered. The region spanning 12-65 (LRKEKSRDAARSRRSQETEVLYQLAHTLPFARGVSAHLDKASIMRLTISYLRMH) is the bHLH domain. The tract at residues 75 to 98 (QVRKEGEPLDACYLKALEGFVMVL) is nuclear localization signal. PAS domains follow at residues 80-150 (GEPL…PSLS) and 225-295 (PHPA…LSKG). Positions 228 to 272 (ASLEPPLGRGAFLSRHSLDMKFTYCDERIAEVAGYSPDDLIGCSA) are nuclear export signal. A disordered region spans residues 352–379 (EQTEQHTRRPPQLGTSSKKGIPGNSLDP). The LRRLL signature appears at 410–413 (LRRL). 2 disordered regions span residues 417–445 (ILDG…ADLP) and 459–480 (STAR…PDTP). Residues 421–433 (PPTAATPSTPQAA) show a composition bias toward low complexity. The tract at residues 448-581 (LAVGLENAHR…SEDKGLELLE (134 aa)) is ODD. Positions 450 to 501 (VGLENAHRLSTARKNKTMETDLDIAQDPDTPDLEMLAPYISMDDDFQLNSSE) are NTAD. K463 is covalently cross-linked (Glycyl lysine isopeptide (Lys-Gly) (interchain with G-Cter in ubiquitin)). The segment covering 469–480 (TDLDIAQDPDTP) has biased composition (acidic residues). An LAPYISMD motif is present at residues 485 to 492 (LAPYISMD). P487 is subject to 4-hydroxyproline. Residues 500–595 (SEQLPKVHRR…KRSPRLEPGS (96 aa)) form a disordered region. The segment covering 505–521 (KVHRRPPRTARRPRARS) has biased composition (basic residues). Residue K565 forms a Glycyl lysine isopeptide (Lys-Gly) (interchain with G-Cter in ubiquitin) linkage. Over residues 572-584 (SEDKGLELLETKP) the composition is skewed to basic and acidic residues.

As to quaternary structure, interacts with ARNT, BAD, BCL2L2, EPAS1, HIF1A, MCL1 and VHL. Post-translationally, in normoxia, hydroxylated on Pro-487 in the oxygen-dependent degradation domain (ODD) by PHD. The hydroxylated proline promotes interaction with VHL, initiating rapid ubiquitination and subsequent proteasomal degradation. Ubiquitinated; ubiquitination occurs in a VHL- and oxygen-dependent pathway and subsequently targeted for proteasomal degradation. Expressed in the perivenous zone of the liver. Expressed in all tissues examined during normoxia. Expressed in brain and lung. Expressed in periportal and perivenous hepatocytes and in endothelial cells of the central vein (at protein level). Highest expression seen in the cerebral cortex, hippocampus, and lung. Low expression in myocardial tissue and liver.

It is found in the nucleus. The protein localises to the cytoplasm. The protein resides in the nucleus speckle. Its subcellular location is the mitochondrion. Acts as a transcriptional regulator in adaptive response to low oxygen tension. Attenuates the ability of transcription factor HIF1A, EPAS1 and the HIF1A-ARNT complex to bind to hypoxia-responsive elements (HRE) located within the enhancer/promoter of hypoxia-inducible target genes and hence inhibits HRE-driven transcriptional activation. Functions as an inhibitor of angiogenesis in hypoxic cells of the cornea. Plays a role in the development of the cardiorespiratory system. May also be involved in apoptosis. May act as a tumor suppressor. This Rattus norvegicus (Rat) protein is Hypoxia-inducible factor 3-alpha.